Here is a 207-residue protein sequence, read N- to C-terminus: Porin MspD (207 aa).

Positions 1–24 (MRYLVMMFALLVSVTLVSPRPANA) are cleaved as a signal peptide.

It belongs to the mycobacterial porin (TC 1.B.24) family. In terms of assembly, octamers. Probably forms a goblet with the wide end on the exterior of the outer membrane and a central channel. It is not known if mixed oligomers of MspD with other Msp subunits form in vivo.

Its subcellular location is the cell outer membrane. The protein resides in the secreted. The protein localises to the cell wall. A backup porin induced when MspA, the major porin, is deleted. It probably forms a water-filled channel which favors the permeation of cations. There are about 2400 porins in wild-type, 800 in an mspA deletion and 150 in a double mspA-mspC deletion. The sequence is that of Porin MspD (mspD) from Mycolicibacterium smegmatis (strain ATCC 700084 / mc(2)155) (Mycobacterium smegmatis).